Consider the following 403-residue polypeptide: Cysteine desulfurase IscS (403 aa).

Pyridoxal 5'-phosphate-binding positions include 73–74, asparagine 153, glutamine 181, and 201–203; these read AT and SAH. Lysine 204 bears the N6-(pyridoxal phosphate)lysine mark. Threonine 241 provides a ligand contact to pyridoxal 5'-phosphate. Cysteine 326 acts as the Cysteine persulfide intermediate in catalysis. Cysteine 326 lines the [2Fe-2S] cluster pocket.

It belongs to the class-V pyridoxal-phosphate-dependent aminotransferase family. NifS/IscS subfamily. As to quaternary structure, homodimer. Forms a heterotetramer with IscU, interacts with other sulfur acceptors. Pyridoxal 5'-phosphate is required as a cofactor.

The protein resides in the cytoplasm. It carries out the reaction (sulfur carrier)-H + L-cysteine = (sulfur carrier)-SH + L-alanine. The protein operates within cofactor biosynthesis; iron-sulfur cluster biosynthesis. Its function is as follows. Master enzyme that delivers sulfur to a number of partners involved in Fe-S cluster assembly, tRNA modification or cofactor biosynthesis. Catalyzes the removal of elemental sulfur atoms from cysteine to produce alanine. Functions as a sulfur delivery protein for Fe-S cluster synthesis onto IscU, an Fe-S scaffold assembly protein, as well as other S acceptor proteins. The chain is Cysteine desulfurase IscS from Methylococcus capsulatus (strain ATCC 33009 / NCIMB 11132 / Bath).